A 261-amino-acid polypeptide reads, in one-letter code: 5-oxoprolinase subunit A (261 aa).

It belongs to the LamB/PxpA family. As to quaternary structure, forms a complex composed of PxpA, PxpB and PxpC.

The enzyme catalyses 5-oxo-L-proline + ATP + 2 H2O = L-glutamate + ADP + phosphate + H(+). In terms of biological role, catalyzes the cleavage of 5-oxoproline to form L-glutamate coupled to the hydrolysis of ATP to ADP and inorganic phosphate. This is 5-oxoprolinase subunit A from Coprothermobacter proteolyticus (strain ATCC 35245 / DSM 5265 / OCM 4 / BT).